The chain runs to 449 residues: MLETPKVLLKNLQDCKIHFIGIGGIGISGLAKYLKAQGAKISGSDIAISPSVKYLKALGVEINIPHDPKAINHQDVIIHSAIIKEDNTEIQRAKELEIPILSRKDALYSILKDKRVFSVCGAHGKSSITAMLSAICPAFGAIIGAHSKEFDSNVRESADMSLVFEADESDSSFLFSNPFCAIVPNTEPEHLEHYDHDLERFFFAYKYFLDHAQKRVIYKEDPFLKNYSKDAIVLEKKDIYNIQYILKDGEPYTSFELKNLGAFLVWGLGEHNATNASLAILSALDELNLEEIRNNLLNFKGIKKRFDILQKNNLILIDDYAHHPTEIGATLKSARIYANLLNTQEKIIVIWQAHKYSRLMDNLEEFKKCFLEHCDRLIILPVYSASEVKRDIDLKAHFKHYNPTFIDRVRKKGDFLELLVNDNVVETIEKGFVIGFGAGDITYQLRGEM.

121–127 (GAHGKSS) serves as a coordination point for ATP.

Belongs to the MurCDEF family.

The protein localises to the cytoplasm. It carries out the reaction UDP-N-acetyl-alpha-D-muramate + L-alanine + ATP = UDP-N-acetyl-alpha-D-muramoyl-L-alanine + ADP + phosphate + H(+). It functions in the pathway cell wall biogenesis; peptidoglycan biosynthesis. Cell wall formation. The polypeptide is UDP-N-acetylmuramate--L-alanine ligase (Helicobacter pylori (strain J99 / ATCC 700824) (Campylobacter pylori J99)).